We begin with the raw amino-acid sequence, 182 residues long: Ribosome-recycling factor (182 aa).

The protein belongs to the RRF family.

It is found in the cytoplasm. Responsible for the release of ribosomes from messenger RNA at the termination of protein biosynthesis. May increase the efficiency of translation by recycling ribosomes from one round of translation to another. The chain is Ribosome-recycling factor from Prochlorococcus marinus (strain MIT 9313).